The sequence spans 241 residues: MRKIIIAGNWKMYKTQAESLDFLKALLPKIADDHEEREVVLCTPFTDLGLMSKSLHGTRVRLGAQNIHWADEGAFTGEISGSMLTEMGVRYVIVGHSERRQYFGETDETVNQRLKAAQRHGLTPILCVGESKAQRDAGETEAVIFAQLEQDLVDIDQNNLVVAYEPIWAIGTGDTCDATEANRVIGLIREKLTNKNVTIQYGGSVKPNNVDEIMAQPEIDGALVGGASLEAESFARLVNYV.

Residue 9-11 (NWK) participates in substrate binding. Catalysis depends on histidine 96, which acts as the Electrophile. The active-site Proton acceptor is glutamate 165. Substrate is bound by residues glycine 171, serine 204, and 225-226 (GG).

Belongs to the triosephosphate isomerase family. Homodimer.

It localises to the cytoplasm. The enzyme catalyses D-glyceraldehyde 3-phosphate = dihydroxyacetone phosphate. Its pathway is carbohydrate biosynthesis; gluconeogenesis. It functions in the pathway carbohydrate degradation; glycolysis; D-glyceraldehyde 3-phosphate from glycerone phosphate: step 1/1. In terms of biological role, involved in the gluconeogenesis. Catalyzes stereospecifically the conversion of dihydroxyacetone phosphate (DHAP) to D-glyceraldehyde-3-phosphate (G3P). This is Triosephosphate isomerase from Picosynechococcus sp. (strain ATCC 27264 / PCC 7002 / PR-6) (Agmenellum quadruplicatum).